A 32-amino-acid chain; its full sequence is Coenzyme PQQ synthesis protein A (32 aa).

A cross-link (pyrroloquinoline quinone (Glu-Tyr)) is located at residues 16–20 (EINMY).

The protein belongs to the PqqA family.

The protein operates within cofactor biosynthesis; pyrroloquinoline quinone biosynthesis. Functionally, required for coenzyme pyrroloquinoline quinone (PQQ) biosynthesis. PQQ is probably formed by cross-linking a specific glutamate to a specific tyrosine residue and excising these residues from the peptide. The protein is Coenzyme PQQ synthesis protein A of Dinoroseobacter shibae (strain DSM 16493 / NCIMB 14021 / DFL 12).